Consider the following 176-residue polypeptide: Inner membrane-spanning protein YciB (176 aa).

The next 5 membrane-spanning stretches (helical) occupy residues 3 to 23, 49 to 69, 72 to 92, 118 to 138, and 149 to 169; these read FLFD…WGIF, TMLW…LVLH, KFIQ…LVAA, KLNL…LYVV, and FKLF…SLWL.

This sequence belongs to the YciB family.

The protein resides in the cell inner membrane. Plays a role in cell envelope biogenesis, maintenance of cell envelope integrity and membrane homeostasis. The chain is Inner membrane-spanning protein YciB from Burkholderia mallei (strain NCTC 10247).